A 1000-amino-acid polypeptide reads, in one-letter code: C2 domain-containing protein 5 (1000 aa).

The region spanning 1 to 109 (MPGKLKVKIV…EAATVISGWF (109 aa)) is the C2 domain. D19, D26, D76, D78, S81, and D84 together coordinate Ca(2+). S197 carries the post-translational modification Phosphoserine; by PKB/AKT2. Phosphoserine occurs at positions 200 and 260. A disordered region spans residues 265–330 (MKEIPFNEDP…SGSAGKEGGP (66 aa)). Polar residues predominate over residues 274–289 (PNPNTHSSGPSTPLKN). The span at 290-318 (QTYSFSPSKSYSRQSSSSDTDLSLTPKTG) shows a compositional bias: low complexity. Residues S293, S295, S304, S305, and S306 each carry the phosphoserine modification. Phosphothreonine is present on T317. The segment covering 319–328 (MGSGSAGKEG) has biased composition (gly residues). The residue at position 323 (S323) is a Phosphoserine. T601 carries the post-translational modification Phosphothreonine. The interval 639-669 (EIIGSPIPEPRQRSRLLRSQSESSDEVTELD) is disordered. 5 positions are modified to phosphoserine: S643, S657, S659, S661, and S662. Position 666 is a phosphothreonine (T666). Phosphoserine is present on S671. T807 carries the post-translational modification Phosphothreonine. S817 and S852 each carry phosphoserine.

Ca(2+) serves as cofactor. In terms of processing, phosphorylated on Ser-197 by active myristoylated kinase AKT2; insulin-stimulated phosphorylation by AKT2 regulates SLC2A4/GLUT4 translocation into the plasma membrane.

The protein localises to the cytoplasmic vesicle membrane. It is found in the cytoplasm. It localises to the cell cortex. The protein resides in the cell membrane. Its subcellular location is the cell projection. The protein localises to the ruffle. Functionally, required for insulin-stimulated glucose transport and glucose transporter SLC2A4/GLUT4 translocation from intracellular glucose storage vesicle (GSV) to the plasma membrane (PM) in adipocytes. Binds phospholipid membranes in a calcium-dependent manner and is necessary for the optimal membrane fusion between SLC2A4/GLUT4 GSV and the PM. In Homo sapiens (Human), this protein is C2 domain-containing protein 5 (C2CD5).